The sequence spans 415 residues: uncharacterized protein (415 aa).

[4Fe-4S] cluster-binding residues include Cys276 and Cys316.

Homodimer. [4Fe-4S] cluster serves as cofactor.

This is an uncharacterized protein from Methanocaldococcus jannaschii (strain ATCC 43067 / DSM 2661 / JAL-1 / JCM 10045 / NBRC 100440) (Methanococcus jannaschii).